The primary structure comprises 408 residues: Succinylornithine transaminase (408 aa).

K252 carries the N6-(pyridoxal phosphate)lysine modification.

This sequence belongs to the class-III pyridoxal-phosphate-dependent aminotransferase family. AstC subfamily. Pyridoxal 5'-phosphate serves as cofactor.

It carries out the reaction N(2)-succinyl-L-ornithine + 2-oxoglutarate = N-succinyl-L-glutamate 5-semialdehyde + L-glutamate. It participates in amino-acid degradation; L-arginine degradation via AST pathway; L-glutamate and succinate from L-arginine: step 3/5. Its function is as follows. Catalyzes the transamination of N(2)-succinylornithine and alpha-ketoglutarate into N(2)-succinylglutamate semialdehyde and glutamate. Can also act as an acetylornithine aminotransferase. The polypeptide is Succinylornithine transaminase (Salmonella newport (strain SL254)).